A 172-amino-acid polypeptide reads, in one-letter code: MTKENYFKVGTIVNTHGIRGEVKIMAITDFAADRFKKGAALQIETKQGFVPVTVQSSRLHKNMWLVLFEGVTNINEIEKYKTNDIYVYGEAREALGDDEYYYDEIIDSRVVSLSGEAIGVVSEIMTTGANDVWVVKRPGQSDALIPMIDDVVKSVDVANKLITIDVLEGLLD.

The region spanning Asp-97 to Leu-170 is the PRC barrel domain.

Belongs to the RimM family. As to quaternary structure, binds ribosomal protein uS19.

Its subcellular location is the cytoplasm. An accessory protein needed during the final step in the assembly of 30S ribosomal subunit, possibly for assembly of the head region. Essential for efficient processing of 16S rRNA. May be needed both before and after RbfA during the maturation of 16S rRNA. It has affinity for free ribosomal 30S subunits but not for 70S ribosomes. The polypeptide is Ribosome maturation factor RimM (Leuconostoc citreum (strain KM20)).